The sequence spans 622 residues: MQTRYMERTNSMREKRKLEEDDNQQQQQQPERKRPALASVIVEALKMDSLQRLCSSLEPILRRVVSEEVERALAKLGPARLSERSSPKRIEGIGGRNLQLQFRSRLSVPLFTGGKIEGEQGAAIHVVLLDMTTGHVLTVGPEASAKLDVVVLDGDFNTEDDDGWSGEEFEGHLVKERQGKRPLLTGDVQVTLKEGVGTLGELIFTDNSSWIRCRKFRLGLRVSSGYCEGMRVREAKTEAFTVKDHRGELYKKHYPPALDDEVWRLEKIGKDGAFHKKLNKAGIYNVKEFLRLMVKDSQKLRTILGSGMSNRMWETLAEHSKTCVLSEMLYVYYPEDSVGVVFNNIYEFSGLISGKQYYPADSLSDNQKGYVDGLVRKAYENWEQVIEYDSKSLMNFNQVSKTDDIDYSMPVSVPSQPSTSYSDVTVEAYNQSPASSFPGQSQLADTTYMHFGNSSFAPQDQLVNNTHESQSMINSNGGVRLALGPATGSQNQEQLVHPPPEINSYNDWSNTCNRGVDGFLSEEEIRARSNEMLENDDMQQLLRLFSMNGGDQQTPLNMGEDSFGFHSFGQTSMADYEEDRSNSGKAVVGWLKIKAAMRWGFFIRRKAAQRRAQIVQLDEDDE.

Residues 1 to 19 show a composition bias toward basic and acidic residues; the sequence is MQTRYMERTNSMREKRKLE. A disordered region spans residues 1-35; that stretch reads MQTRYMERTNSMREKRKLEEDDNQQQQQQPERKRP. Positions 10-89 are calmodulin-binding; it reads NSMREKRKLE…RLSERSSPKR (80 aa). Positions 159-282 are DNA-binding; the sequence is EDDDGWSGEE…AFHKKLNKAG (124 aa).

The protein belongs to the plant ACBP60 protein family. As to quaternary structure, interacts with calmodulin (CaM). Expressed in stems, flowers and root.

It is found in the nucleus. Its function is as follows. Transcription activator that binds DNA in a sequence-specific manner, likely 5'-GAAATTTTGG-3', to promote the expression of target genes. This is Calmodulin-binding protein 60 C from Arabidopsis thaliana (Mouse-ear cress).